Here is a 234-residue protein sequence, read N- to C-terminus: MKFGKLLKRQIEQSLPEWRDKFVSYKELKRIVASISGSPADEAAFVAALAADIDKIDSFFLEQEEEFVIRHRELQEAIKKAAEAAAEVAGIRREIVDFHGEMVLLLSYSSINYIGVGKILKKHDKRTGGALAAPVAEAVRERRHFFKTETVSRMVRECEAMMAEAAVLPAEAAPEALAAAAEHGIFRNTVAALLTMEDVRRGSSTHGRHSLPPLTLPDSDWLRSFQPPSPIPIQ.

The 137-residue stretch at 1–137 (MKFGKLLKRQ…GGALAAPVAE (137 aa)) folds into the SPX domain. Residues 202–234 (GSSTHGRHSLPPLTLPDSDWLRSFQPPSPIPIQ) are disordered.

As to expression, predominantly expressed in roots and leaves.

Functionally, may be involved in maintaining cellular Pi homeostasis when plants are exposed to an external change in Pi. This Oryza sativa subsp. japonica (Rice) protein is SPX domain-containing protein 6.